The primary structure comprises 359 residues: 4-galactosyl-N-acetylglucosaminide 3-alpha-L-fucosyltransferase FUT6 (359 aa).

The Cytoplasmic segment spans residues 1–14 (MDPLGPAKPQWSCR). A helical; Signal-anchor for type II membrane protein membrane pass occupies residues 15-34 (CCLTTLLFQLLVAVCFFSYL). The Lumenal segment spans residues 35–359 (RVSRDDPTVY…QTRSITAWFT (325 aa)). N-linked (GlcNAc...) asparagine glycans are attached at residues Asn-46, Asn-91, Asn-153, and Asn-184. A determines site-specific fucosylation region spans residues 73-112 (KPTALPRCSEMLPGTADCNITADRKVYPQADAVIVHHREV).

This sequence belongs to the glycosyltransferase 10 family. As to quaternary structure, homodimer and monomer. Monomer (secreted form). Post-translationally, N-glycosylated. In terms of processing, proteolytic cleavage releases a secreted glycoform of 43 kDa.

It is found in the golgi apparatus. The protein resides in the golgi stack membrane. The protein localises to the secreted. It catalyses the reaction a beta-D-galactosyl-(1-&gt;4)-N-acetyl-beta-D-glucosaminyl derivative + GDP-beta-L-fucose = a beta-D-galactosyl-(1-&gt;4)-[alpha-L-fucosyl-(1-&gt;3)]-N-acetyl-beta-D-glucosaminyl derivative + GDP + H(+). It carries out the reaction an N-acetyl-alpha-neuraminyl-(2-&gt;3)-beta-D-galactosyl-(1-&gt;4)-N-acetyl-beta-D-glucosaminyl derivative + GDP-beta-L-fucose = an alpha-Neu5Ac-(2-&gt;3)-beta-D-Gal-(1-&gt;4)-[alpha-L-Fuc-(1-&gt;3)]-beta-D-GlcNAc derivative + GDP + H(+). The catalysed reaction is an alpha-Neu5Ac-(2-&gt;3)-beta-D-Gal-(1-&gt;4)-beta-D-GlcNAc-(1-&gt;3)-beta-D-Gal-(1-&gt;4)-[alpha-L-Fuc-(1-&gt;3)]-beta-D-GlcNAc derivative + GDP-beta-L-fucose = an alpha-Neu5Ac-(2-&gt;3)-beta-D-Gal-(1-&gt;4)-[alpha-L-Fuc-(1-&gt;3)]-beta-D-GlcNAc-(1-&gt;3)-beta-D-Gal-(1-&gt;4)-[alpha-L-Fuc-(1-&gt;3)]-beta-D-GlcNAc derivative + GDP + H(+). The enzyme catalyses a neolactoside nLc6Cer + GDP-beta-L-fucose = beta-D-Gal-(1-&gt;4)-[alpha-L-Fuc-(1-&gt;3)]-beta-D-GlcNAc-(1-&gt;3)-beta-D-Gal-(1-&gt;4)-beta-D-GlcNAc-(1-&gt;3)-beta-D-Gal-(1-&gt;4)-beta-D-Glc-(1&lt;-&gt;1')-Cer + GDP + H(+). It catalyses the reaction a neolactoside nLc6Cer + GDP-beta-L-fucose = beta-D-galactosyl-(1-&gt;4)-N-acetyl-beta-D-glucosaminyl-(1-&gt;3)-beta-D-galactosyl-(1-&gt;4)-[alpha-L-fucosyl-(1-&gt;3)]-N-acetyl-beta-D-glucosaminyl-(1-&gt;3)-beta-D-galactosyl-(1-&gt;4)-beta-D-glucosyl-(1&lt;-&gt;1')-ceramide + GDP + H(+). It carries out the reaction a neolactoside VI(3)-alpha-NeuNAc-nLc6Cer + GDP-beta-L-fucose = a neolactoside VI(3)-alpha-NeuAc,V(3)-alphaFuc-nLc6Cer + GDP + H(+). The catalysed reaction is beta-D-galactosyl-(1-&gt;4)-N-acetyl-D-glucosamine + GDP-beta-L-fucose = beta-D-galactosyl-(1-&gt;4)-[alpha-L-fucosyl-(1-&gt;3)]-N-acetyl-D-glucosamine + GDP + H(+). The enzyme catalyses N-acetyl-alpha-neuraminosyl-(2-&gt;3)-beta-D-galactosyl-(1-&gt;4)-N-acetyl-beta-D-glucosamine + GDP-beta-L-fucose = N-acetyl-alpha-neuraminosyl-(2-&gt;3)-beta-D-galactosyl-(1-&gt;4)-[alpha-L-fucosyl-(1-&gt;3)]-N-acetyl-beta-D-glucosamine + GDP + H(+). It catalyses the reaction lactose + GDP-beta-L-fucose = beta-D-galactosyl-(1-&gt;4)-[alpha-L-fucosyl-(1-&gt;3)]-D-glucose + GDP + H(+). It carries out the reaction alpha-L-Fuc-(1-&gt;2)-beta-D-Gal-(1-&gt;4)-D-Glc + GDP-beta-L-fucose = alpha-L-Fuc-(1-&gt;2)-beta-D-Gal-(1-&gt;4)-[alpha-L-Fuc-(1-&gt;3)]-D-Glc + GDP + H(+). The catalysed reaction is a beta-D-galactosyl-(1-&gt;4)-N-acetyl-beta-D-6-sulfooxy-glucosaminyl derivative + GDP-beta-L-fucose = a beta-D-galactosyl-(1-&gt;4)-[alpha-L-fucosyl-(1-&gt;3)]-N-acetyl-beta-D-6-sulfooxy-glucosaminyl derivative + GDP + H(+). It participates in protein modification; protein glycosylation. Catalyzes the transfer of L-fucose, from a guanosine diphosphate-beta-L-fucose, to the N-acetyl glucosamine (GlcNAc) of a distal alpha2,3 sialylated lactosamine unit of a glycoprotein- or glycolipid-linked sialopolylactosamines chain or of a distal or internal lactosamine unit of a neutral glycoprotein- or glycolipid-linked polylactosamines chain through an alpha-1,3 glycosidic linkage and participates in surface expression of the sialyl Lewis X (sLe(x)), Lewis X (Le(x)) and non sialylated VIM2 determinants. Moreover transfers fucose to H-type 2 (Fucalpha1-2Galbeta1-4GlcNAc) chain acceptor substrates and participates in difucosylated sialyl Lewis x determinants. Also fucosylates a polylactosamine substrate having a 6 sulfate modification at the GlcNAc moiety and gives rise to sialyl and non-sialyl 6-sulfo lewis X. Does not have activity towards type 1 ((Galbeta1-3GlcNAc)) and H-type 1 chain (Fucalpha1-2Galbeta1-3GlcNAc) acceptors substrates. The chain is 4-galactosyl-N-acetylglucosaminide 3-alpha-L-fucosyltransferase FUT6 from Gorilla gorilla gorilla (Western lowland gorilla).